Here is a 1047-residue protein sequence, read N- to C-terminus: Helicase-like transcription factor CHR27 (1047 aa).

Low complexity predominate over residues 1–11 (MDSAIEISSGS). 3 disordered regions span residues 1 to 89 (MDSA…SGSG), 103 to 130 (RTLP…SGSR), and 145 to 174 (KRTL…GSRF). 2 stretches are compositionally biased toward polar residues: residues 52-88 (TNQA…SSGS) and 118-128 (SGTNNISNASG). The Helicase ATP-binding domain maps to 296–597 (ETSSFNCPGG…YSYFRFLRYD (302 aa)). 309–316 (DDQGLGKT) is a binding site for ATP. 2 disordered regions span residues 349 to 407 (ADDE…TRAF) and 511 to 533 (VGAS…SEPD). Positions 354–368 (DNAKHESGSHVKPEL) are enriched in basic and acidic residues. A compositionally biased stretch (polar residues) spans 370–379 (VSSNSETSVL). Residues 385–400 (DENDSSDMEKAEDEEA) show a composition bias toward acidic residues. Residues 511–523 (VGASKKSKRRGRK) show a composition bias toward basic residues. The segment at 751-790 (CYECNEPPEKPVVTLCGHIFCYECVLEYITGDENTCPVPR) adopts an RING-type; degenerate zinc-finger fold. The span at 851–868 (QPDSPNSAQHGQMPSSSR) shows a compositional bias: polar residues. Residues 851-873 (QPDSPNSAQHGQMPSSSRPYDDD) form a disordered region. In terms of domain architecture, Helicase C-terminal spans 887–1042 (SPSQGAVKTI…ATRLTVDDLK (156 aa)).

It belongs to the SNF2/RAD54 helicase family. RAD16 subfamily. In terms of assembly, interacts with SUVR2. Interacts with itself.

The protein localises to the nucleus. Probable helicase-like transcription factor involved in transcriptional gene silencing. Associates with SUVR2 and contributes to transcriptional gene silencing at RNA-directed DNA methylation (RdDM) target loci but also at RdDM-independent target loci. May be involved in nucleosome positioning to form ordered nucleosome arrays on chromatin. Associates with SUVR2 and functions redundantly with FRG2. Required for the efficient methylation of a broad range of RdDM target loci. The chain is Helicase-like transcription factor CHR27 from Arabidopsis thaliana (Mouse-ear cress).